Consider the following 170-residue polypeptide: NADH-quinone oxidoreductase subunit B (170 aa).

The [4Fe-4S] cluster site is built by cysteine 46, cysteine 47, cysteine 111, and cysteine 141.

The protein belongs to the complex I 20 kDa subunit family. As to quaternary structure, NDH-1 is composed of 14 different subunits. Subunits NuoB, C, D, E, F, and G constitute the peripheral sector of the complex. [4Fe-4S] cluster serves as cofactor.

Its subcellular location is the cell membrane. The catalysed reaction is a quinone + NADH + 5 H(+)(in) = a quinol + NAD(+) + 4 H(+)(out). Functionally, NDH-1 shuttles electrons from NADH, via FMN and iron-sulfur (Fe-S) centers, to quinones in the respiratory chain. The immediate electron acceptor for the enzyme in this species is believed to be a menaquinone. Couples the redox reaction to proton translocation (for every two electrons transferred, four hydrogen ions are translocated across the cytoplasmic membrane), and thus conserves the redox energy in a proton gradient. The polypeptide is NADH-quinone oxidoreductase subunit B (Geobacillus thermodenitrificans (strain NG80-2)).